The chain runs to 209 residues: Bilin biosynthesis protein RpcF (209 aa).

This sequence belongs to the CpcE/RpcE/PecE family.

An enzyme involved in the biosynthesis of bilin. Might be involved in the specific attachment of phycoerythrobilin (PEB) to the R-phycocyanin II alpha chain. The sequence is that of Bilin biosynthesis protein RpcF (rpcF) from Synechococcus sp. (strain WH8020).